A 425-amino-acid chain; its full sequence is Riboflavin biosynthesis protein RibBA (425 aa).

The DHBP synthase stretch occupies residues 1–204; the sequence is MTRLDSVERA…IADLIEWRRK (204 aa). Residues 28 to 29, D33, 141 to 145, and E165 contribute to the D-ribulose 5-phosphate site; these read RE and RPGHT. E29 is a binding site for Mg(2+). H144 contributes to the Mg(2+) binding site. The GTP cyclohydrolase II stretch occupies residues 205–425; that stretch reads HEKHIERVAE…HLPGEFGGAL (221 aa). 259–263 lines the GTP pocket; it reads RVHSE. C264, C275, and C277 together coordinate Zn(2+). Residues Q280, 303–305, and T325 each bind GTP; that span reads EGR. The active-site Proton acceptor; for GTP cyclohydrolase activity is D337. R339 serves as the catalytic Nucleophile; for GTP cyclohydrolase activity. The GTP site is built by T360 and K365.

This sequence in the N-terminal section; belongs to the DHBP synthase family. It in the C-terminal section; belongs to the GTP cyclohydrolase II family. Requires Mg(2+) as cofactor. Mn(2+) serves as cofactor. It depends on Zn(2+) as a cofactor.

It carries out the reaction D-ribulose 5-phosphate = (2S)-2-hydroxy-3-oxobutyl phosphate + formate + H(+). The enzyme catalyses GTP + 4 H2O = 2,5-diamino-6-hydroxy-4-(5-phosphoribosylamino)-pyrimidine + formate + 2 phosphate + 3 H(+). The protein operates within cofactor biosynthesis; riboflavin biosynthesis; 2-hydroxy-3-oxobutyl phosphate from D-ribulose 5-phosphate: step 1/1. It participates in cofactor biosynthesis; riboflavin biosynthesis; 5-amino-6-(D-ribitylamino)uracil from GTP: step 1/4. In terms of biological role, catalyzes the conversion of D-ribulose 5-phosphate to formate and 3,4-dihydroxy-2-butanone 4-phosphate. Catalyzes the conversion of GTP to 2,5-diamino-6-ribosylamino-4(3H)-pyrimidinone 5'-phosphate (DARP), formate and pyrophosphate. The polypeptide is Riboflavin biosynthesis protein RibBA (Mycobacterium ulcerans (strain Agy99)).